Here is an 80-residue protein sequence, read N- to C-terminus: Small membrane A-kinase anchor protein (80 aa).

Gly2 carries N-myristoyl glycine lipidation.

Belongs to the small membrane AKAP family. May be palmitoylated at Cys-3.

It localises to the cell membrane. Functionally, binds to type I regulatory subunits of protein kinase A and may anchor/target them to the plasma membrane. In Tetraodon nigroviridis (Spotted green pufferfish), this protein is Small membrane A-kinase anchor protein.